Consider the following 358-residue polypeptide: Spermatogenesis-associated protein 22 (358 aa).

Composition is skewed to polar residues over residues 1 to 12 (MKRNLNESSARS), 30 to 51 (QPLTSNPLQNDPGVSTVSDSYG), 81 to 121 (PASA…TSLR), and 150 to 159 (QQQKQFQTPE). Disordered regions lie at residues 1–51 (MKRN…DSYG), 81–122 (PASA…SLRT), and 150–172 (QQQKQFQTPEFPNLPGHKEAEVP).

In terms of assembly, component of a multiprotein complex with MEIOB and RPA2. Interacts with MEIOB. Interacts with the complex BRME1:HSF2BP:BRCA2. As to expression, specifically expressed in gonadal germ cells, when male and female germ cells progress through prophase of meiosis I.

It localises to the chromosome. Meiosis-specific protein required for homologous recombination in meiosis I. The sequence is that of Spermatogenesis-associated protein 22 from Mus musculus (Mouse).